The chain runs to 402 residues: 2,3-bisphosphoglycerate-independent phosphoglycerate mutase (402 aa).

Positions Ser-155–Pro-174 are disordered. Basic and acidic residues predominate over residues Ser-160 to Pro-174.

The protein belongs to the BPG-independent phosphoglycerate mutase family. A-PGAM subfamily.

It carries out the reaction (2R)-2-phosphoglycerate = (2R)-3-phosphoglycerate. It participates in carbohydrate degradation; glycolysis; pyruvate from D-glyceraldehyde 3-phosphate: step 3/5. Functionally, catalyzes the interconversion of 2-phosphoglycerate and 3-phosphoglycerate. This Picrophilus torridus (strain ATCC 700027 / DSM 9790 / JCM 10055 / NBRC 100828 / KAW 2/3) protein is 2,3-bisphosphoglycerate-independent phosphoglycerate mutase.